Consider the following 229-residue polypeptide: Golgi to ER traffic protein 1 (229 aa).

Topologically, residues 1 to 14 are lumenal; it reads MGILAALDLHPYTL. Residues 15-34 form a helical membrane-spanning segment; the sequence is VVSSFTVLLIQQLVGFIGKS. The Cytoplasmic segment spans residues 35 to 122; sequence TIQEFAWLFY…KINSLVGVVL (88 aa). A coiled-coil region spans residues 60–117; it reads HTKKQEELHKLNREKRSISAQDEYAKWTKLNRQAEKLTAEVKSLSDDIAKDKSKINSL. A helical membrane pass occupies residues 123–143; that stretch reads LFLTTLPLWVFRLWFRKSVLF. Topologically, residues 144–167 are lumenal; the sequence is YLPTGVFPYYVERVLAIPFFASGS. Residues 168–184 form a helical membrane-spanning segment; it reads VGLTVWMFAVNNVISSV. Topologically, residues 185–229 are cytoplasmic; the sequence is LFLLTFPFKPSVPIPIRQTKVEEVVPESAESKESSPEVIDIADAN. Residues 210-219 show a composition bias toward basic and acidic residues; it reads PESAESKESS. The disordered stretch occupies residues 210 to 229; it reads PESAESKESSPEVIDIADAN.

The protein belongs to the WRB/GET1 family. As to quaternary structure, component of the Golgi to ER traffic (GET) complex, which is composed of GET1, GET2 and GET3. Within the complex, GET1 and GET2 form a heterotetramer which is stabilized by phosphatidylinositol binding and which binds to the GET3 homodimer.

Its subcellular location is the endoplasmic reticulum membrane. It localises to the golgi apparatus membrane. Functionally, required for the post-translational delivery of tail-anchored (TA) proteins to the endoplasmic reticulum. Together with GET2, acts as a membrane receptor for soluble GET3, which recognizes and selectively binds the transmembrane domain of TA proteins in the cytosol. The GET complex cooperates with the HDEL receptor ERD2 to mediate the ATP-dependent retrieval of resident ER proteins that contain a C-terminal H-D-E-L retention signal from the Golgi to the ER. The sequence is that of Golgi to ER traffic protein 1 from Scheffersomyces stipitis (strain ATCC 58785 / CBS 6054 / NBRC 10063 / NRRL Y-11545) (Yeast).